Consider the following 256-residue polypeptide: uncharacterized protein (256 aa).

This sequence belongs to the metallo-beta-lactamase superfamily.

This is an uncharacterized protein from Methanocaldococcus jannaschii (strain ATCC 43067 / DSM 2661 / JAL-1 / JCM 10045 / NBRC 100440) (Methanococcus jannaschii).